The primary structure comprises 182 residues: Crossover junction endodeoxyribonuclease RuvC (182 aa).

Active-site residues include Asp-7, Glu-67, and Asp-139. Mg(2+)-binding residues include Asp-7, Glu-67, and Asp-139.

This sequence belongs to the RuvC family. Homodimer which binds Holliday junction (HJ) DNA. The HJ becomes 2-fold symmetrical on binding to RuvC with unstacked arms; it has a different conformation from HJ DNA in complex with RuvA. In the full resolvosome a probable DNA-RuvA(4)-RuvB(12)-RuvC(2) complex forms which resolves the HJ. It depends on Mg(2+) as a cofactor.

It localises to the cytoplasm. It carries out the reaction Endonucleolytic cleavage at a junction such as a reciprocal single-stranded crossover between two homologous DNA duplexes (Holliday junction).. Its function is as follows. The RuvA-RuvB-RuvC complex processes Holliday junction (HJ) DNA during genetic recombination and DNA repair. Endonuclease that resolves HJ intermediates. Cleaves cruciform DNA by making single-stranded nicks across the HJ at symmetrical positions within the homologous arms, yielding a 5'-phosphate and a 3'-hydroxyl group; requires a central core of homology in the junction. The consensus cleavage sequence is 5'-(A/T)TT(C/G)-3'. Cleavage occurs on the 3'-side of the TT dinucleotide at the point of strand exchange. HJ branch migration catalyzed by RuvA-RuvB allows RuvC to scan DNA until it finds its consensus sequence, where it cleaves and resolves the cruciform DNA. The polypeptide is Crossover junction endodeoxyribonuclease RuvC (Bordetella petrii (strain ATCC BAA-461 / DSM 12804 / CCUG 43448)).